Reading from the N-terminus, the 73-residue chain is DNA-binding protein S1FA3 (73 aa).

Positions 47-52 (PPRKKK) match the Nuclear localization signal motif. The segment covering 47–63 (PPRKKKPVSKKKMKKEK) has biased composition (basic residues). Positions 47–73 (PPRKKKPVSKKKMKKEKMKQGVQVPGE) are disordered.

Belongs to the S1FA transcription factor family.

The protein resides in the nucleus. DNA-binding protein that specifically recognizes a negative element (S1F) within the RPS1 promoter. The sequence is that of DNA-binding protein S1FA3 (S1FA3) from Arabidopsis thaliana (Mouse-ear cress).